The following is a 343-amino-acid chain: Heat-inducible transcription repressor HrcA (343 aa).

It belongs to the HrcA family.

In terms of biological role, negative regulator of class I heat shock genes (grpE-dnaK-dnaJ and groELS operons). Prevents heat-shock induction of these operons. The chain is Heat-inducible transcription repressor HrcA from Alkaliphilus metalliredigens (strain QYMF).